The chain runs to 260 residues: Ribonuclease PH (260 aa).

Phosphate is bound by residues R88 and 126–128 (GTR).

It belongs to the RNase PH family. As to quaternary structure, homohexameric ring arranged as a trimer of dimers.

The enzyme catalyses tRNA(n+1) + phosphate = tRNA(n) + a ribonucleoside 5'-diphosphate. Phosphorolytic 3'-5' exoribonuclease that plays an important role in tRNA 3'-end maturation. Removes nucleotide residues following the 3'-CCA terminus of tRNAs; can also add nucleotides to the ends of RNA molecules by using nucleoside diphosphates as substrates, but this may not be physiologically important. Probably plays a role in initiation of 16S rRNA degradation (leading to ribosome degradation) during starvation. The sequence is that of Ribonuclease PH from Mycolicibacterium gilvum (strain PYR-GCK) (Mycobacterium gilvum (strain PYR-GCK)).